The following is a 255-amino-acid chain: 3-oxoacyl-[acyl-carrier-protein] reductase MabA (255 aa).

Residues 32-35 (NRGI), Arg55, 69-70 (DV), Gly98, Tyr161, Lys165, Ile194, and Arg205 contribute to the NADP(+) site. The active-site Proton acceptor is the Tyr161.

The protein belongs to the short-chain dehydrogenases/reductases (SDR) family. In terms of assembly, homotetramer.

It localises to the secreted. The protein resides in the cell wall. The catalysed reaction is a (3R)-hydroxyacyl-[ACP] + NADP(+) = a 3-oxoacyl-[ACP] + NADPH + H(+). The enzyme catalyses a (3R)-3-hydroxyacyl-CoA + NADP(+) = a 3-oxoacyl-CoA + NADPH + H(+). It carries out the reaction (3R)-3-hydroxybutanoyl-CoA + NADP(+) = acetoacetyl-CoA + NADPH + H(+). It catalyses the reaction (3R)-hydroxyoctanoyl-CoA + NADP(+) = 3-oxooctanoyl-CoA + NADPH + H(+). It participates in lipid metabolism; mycolic acid biosynthesis. Its function is as follows. Part of the mycobacterial fatty acid elongation system FAS-II, which is involved in mycolic acid biosynthesis. Catalyzes the NADPH-dependent reduction of beta-ketoacyl derivatives, the second step of the FAS-II elongation cycle. Has a preference for longer substrates. Can use CoA derivatives as substrates in vitro. The protein is 3-oxoacyl-[acyl-carrier-protein] reductase MabA of Mycolicibacterium smegmatis (strain ATCC 700084 / mc(2)155) (Mycobacterium smegmatis).